Reading from the N-terminus, the 188-residue chain is Large ribosomal subunit protein eL18 (188 aa).

Lys-119 is covalently cross-linked (Glycyl lysine isopeptide (Lys-Gly) (interchain with G-Cter in SUMO2)). A Phosphoserine modification is found at Ser-130. The segment at 150–188 (RHFGKAPGTPHSHTKPYVRSKGRKFERARGRRASRGYKN) is disordered. The residue at position 158 (Thr-158) is a Phosphothreonine. 2 stretches are compositionally biased toward basic residues: residues 161–171 (SHTKPYVRSKG) and 178–188 (RGRRASRGYKN). A Glycyl lysine isopeptide (Lys-Gly) (interchain with G-Cter in SUMO2) cross-link involves residue Lys-164.

Belongs to the eukaryotic ribosomal protein eL18 family. As to quaternary structure, component of the large ribosomal subunit.

The protein resides in the cytoplasm. It is found in the cytosol. Its subcellular location is the rough endoplasmic reticulum. Functionally, component of the large ribosomal subunit. The ribosome is a large ribonucleoprotein complex responsible for the synthesis of proteins in the cell. This chain is Large ribosomal subunit protein eL18 (RPL18), found in Bos taurus (Bovine).